Reading from the N-terminus, the 159-residue chain is Phosphopantetheine adenylyltransferase (159 aa).

Position 10 (Thr-10) interacts with substrate. ATP-binding positions include 10–11 and His-18; that span reads TF. Substrate contacts are provided by Lys-42, Leu-74, and Arg-88. Residues 89 to 91, Glu-99, and 124 to 130 each bind ATP; these read GMR and WSYVSST.

It belongs to the bacterial CoaD family. Homohexamer. The cofactor is Mg(2+).

The protein resides in the cytoplasm. It catalyses the reaction (R)-4'-phosphopantetheine + ATP + H(+) = 3'-dephospho-CoA + diphosphate. It functions in the pathway cofactor biosynthesis; coenzyme A biosynthesis; CoA from (R)-pantothenate: step 4/5. Its function is as follows. Reversibly transfers an adenylyl group from ATP to 4'-phosphopantetheine, yielding dephospho-CoA (dPCoA) and pyrophosphate. The chain is Phosphopantetheine adenylyltransferase from Mannheimia succiniciproducens (strain KCTC 0769BP / MBEL55E).